Reading from the N-terminus, the 505-residue chain is MSVPRPSRAALLLLVPLLALSAGASDVVELSDADFESGLAERPGLVLVEFFAPWCGHCKRLAPEYEAAATRLKGIVPLVKVDCTANSNTCNKYGVSGYPTLKIFRDGEESGTYDGPRTADGIVSHLKKQAGPASVALSSVADFEKFIGDKDASVVGFFRDASGDAYSEFMKAANNLRDNYRFAHTSEEQLVQKYEEDGEGVVLYRPSRLANKFEDSTVKYTEDKITSAKIKKFIQENIFGICPHMTEDNKDLIQGKDLLVAYYDVDYEKNAKGSNYWRNRVMMIAKKFLDAGHKLSFAVASRKTFGHELSEFGLDNSVGEAPVVAIRTAKGDKFVMQEEFSRDGKALERFLQDYFDGNLKKYLKSEPVPENNDGPVKVVVAENFDEIVNAEDKDVLIEFYAPWCGHCKNLEPKYKELGEKLSKDPNIVIAKMDATANDVPSPYEVRGFPTIYFAPAGKKQSPKKYEGGREVSDFISYLKREATSTPVLQEEDKAKKSKKKAKEDL.

An N-terminal signal peptide occupies residues 1–24 (MSVPRPSRAALLLLVPLLALSAGA). Thioredoxin domains are found at residues 25–131 (SDVV…KQAG) and 341–483 (SRDG…REAT). Residues Cys-55 and Cys-58 each act as nucleophile in the active site. Disulfide bonds link Cys-55–Cys-58, Cys-83–Cys-90, and Cys-404–Cys-407. Residues Cys-404 and Cys-407 each act as nucleophile in the active site. Positions 486–505 (PVLQEEDKAKKSKKKAKEDL) are disordered. The span at 495 to 505 (KKSKKKAKEDL) shows a compositional bias: basic residues. The Prevents secretion from ER signature appears at 502-505 (KEDL).

Belongs to the protein disulfide isomerase family.

The protein localises to the endoplasmic reticulum. It is found in the endoplasmic reticulum lumen. It localises to the melanosome. The catalysed reaction is Catalyzes the rearrangement of -S-S- bonds in proteins.. In terms of biological role, protein disulfide isomerase that catalyzes the formation, isomerization, and reduction or oxidation of disulfide bonds in client proteins and functions as a protein folding chaperone. In Gallus gallus (Chicken), this protein is Protein disulfide-isomerase A3 (PDIA3).